The primary structure comprises 395 residues: ASTRA-associated protein 1 (395 aa).

WD repeat units lie at residues 7–48, 221–260, and 343–386; these read AHVS…PIAS, HYPE…LPVV, and INPG…TGYN.

Belongs to the WD repeat ASA1 family. Component of the ASTRA chromatin remodeling machinery complex.

The protein localises to the nucleus. Functionally, component of the ASTRA complex involved in chromatin remodeling. The chain is ASTRA-associated protein 1 (ASA1) from Eremothecium gossypii (strain ATCC 10895 / CBS 109.51 / FGSC 9923 / NRRL Y-1056) (Yeast).